Here is a 331-residue protein sequence, read N- to C-terminus: GTP 3',8-cyclase (331 aa).

The region spanning 6–231 (PFGRTISYLR…TDIPFKTGGP (226 aa)) is the Radical SAM core domain. Residue Arg15 coordinates GTP. [4Fe-4S] cluster contacts are provided by Cys22 and Cys26. Tyr28 contributes to the S-adenosyl-L-methionine binding site. Cys29 serves as a coordination point for [4Fe-4S] cluster. Arg64 provides a ligand contact to GTP. Position 68 (Gly68) interacts with S-adenosyl-L-methionine. Residue Thr98 coordinates GTP. Ser122 provides a ligand contact to S-adenosyl-L-methionine. Lys158 contacts GTP. Met192 contributes to the S-adenosyl-L-methionine binding site. Positions 255 and 258 each coordinate [4Fe-4S] cluster. 260–262 (RVR) serves as a coordination point for GTP. Cys272 provides a ligand contact to [4Fe-4S] cluster.

It belongs to the radical SAM superfamily. MoaA family. In terms of assembly, monomer and homodimer. [4Fe-4S] cluster serves as cofactor.

The enzyme catalyses GTP + AH2 + S-adenosyl-L-methionine = (8S)-3',8-cyclo-7,8-dihydroguanosine 5'-triphosphate + 5'-deoxyadenosine + L-methionine + A + H(+). It functions in the pathway cofactor biosynthesis; molybdopterin biosynthesis. Functionally, catalyzes the cyclization of GTP to (8S)-3',8-cyclo-7,8-dihydroguanosine 5'-triphosphate. The chain is GTP 3',8-cyclase from Mesorhizobium japonicum (strain LMG 29417 / CECT 9101 / MAFF 303099) (Mesorhizobium loti (strain MAFF 303099)).